The sequence spans 430 residues: Adenylosuccinate synthetase (430 aa).

GTP-binding positions include 11 to 17 and 39 to 41; these read GDEGKGK and GHT. Residue D12 is the Proton acceptor of the active site. 2 residues coordinate Mg(2+): D12 and G39. Residues 12–15, 37–40, T130, R144, N226, T241, and R305 each bind IMP; these read DEGK and NAGH. Residue H40 is the Proton donor of the active site. 301–307 is a substrate binding site; the sequence is VTTGRKR. Residues R307, 333–335, and 415–417 each bind GTP; these read KLD and GTG.

The protein belongs to the adenylosuccinate synthetase family. As to quaternary structure, homodimer. The cofactor is Mg(2+).

It localises to the cytoplasm. The catalysed reaction is IMP + L-aspartate + GTP = N(6)-(1,2-dicarboxyethyl)-AMP + GDP + phosphate + 2 H(+). Its pathway is purine metabolism; AMP biosynthesis via de novo pathway; AMP from IMP: step 1/2. Its function is as follows. Plays an important role in the de novo pathway and in the salvage pathway of purine nucleotide biosynthesis. Catalyzes the first committed step in the biosynthesis of AMP from IMP. This Scheffersomyces stipitis (strain ATCC 58785 / CBS 6054 / NBRC 10063 / NRRL Y-11545) (Yeast) protein is Adenylosuccinate synthetase.